The chain runs to 103 residues: Large ribosomal subunit protein bL21 (103 aa).

The protein belongs to the bacterial ribosomal protein bL21 family. In terms of assembly, part of the 50S ribosomal subunit. Contacts protein L20.

In terms of biological role, this protein binds to 23S rRNA in the presence of protein L20. The polypeptide is Large ribosomal subunit protein bL21 (Paraburkholderia phytofirmans (strain DSM 17436 / LMG 22146 / PsJN) (Burkholderia phytofirmans)).